We begin with the raw amino-acid sequence, 673 residues long: UvrABC system protein B (673 aa).

The Helicase ATP-binding domain maps to alanine 26 to arginine 183. Position 39-46 (glycine 39–threonine 46) interacts with ATP. Positions tyrosine 92 to isoleucine 115 match the Beta-hairpin motif. The Helicase C-terminal domain occupies glutamine 431–methionine 597. Positions arginine 601–proline 631 are disordered. The segment covering glutamine 618–lysine 630 has biased composition (basic and acidic residues). One can recognise a UVR domain in the interval alanine 635 to alanine 670.

It belongs to the UvrB family. In terms of assembly, forms a heterotetramer with UvrA during the search for lesions. Interacts with UvrC in an incision complex.

The protein localises to the cytoplasm. Functionally, the UvrABC repair system catalyzes the recognition and processing of DNA lesions. A damage recognition complex composed of 2 UvrA and 2 UvrB subunits scans DNA for abnormalities. Upon binding of the UvrA(2)B(2) complex to a putative damaged site, the DNA wraps around one UvrB monomer. DNA wrap is dependent on ATP binding by UvrB and probably causes local melting of the DNA helix, facilitating insertion of UvrB beta-hairpin between the DNA strands. Then UvrB probes one DNA strand for the presence of a lesion. If a lesion is found the UvrA subunits dissociate and the UvrB-DNA preincision complex is formed. This complex is subsequently bound by UvrC and the second UvrB is released. If no lesion is found, the DNA wraps around the other UvrB subunit that will check the other stand for damage. In Xanthomonas oryzae pv. oryzae (strain MAFF 311018), this protein is UvrABC system protein B.